Consider the following 387-residue polypeptide: Methyltransferase phomM (387 aa).

The interval 98-223 (PHRPKDLHIL…QSVADLFTTL (126 aa)) is methyltransferase domain.

Belongs to the class I-like SAM-binding methyltransferase superfamily. Erg6/SMT family.

The protein operates within mycotoxin biosynthesis. Methyltransferase; part of the gene cluster that mediates the biosynthesis of the phomopsins, a group of hexapeptide mycotoxins which infects lupins and causes lupinosis disease in livestock. Within the pathway, phomM acts as an S-adenosylmethionine-dependent alpha-N-methyltransferase that catalyzes two successive N-methylation reactions, converting N-desmethyl-phomopsin A to phomopsin A and phomopsin A further to an N,N-dimethylated congener called phomopsin E. The pathway starts with the processing of the precursor phomA by several endopeptidases including kexin proteases as well as the cluster-specific S41 family peptidase phomP1 and the oligopeptidase phomG to produce 10 identical copies of the hexapeptide Tyr-Val-Ile-Pro-Ile-Asp. After being excised from the precursor peptide, the core peptides are cyclized and modified post-translationally by enzymes encoded within the gene cluster. The timing and order of proteolysis of the phomA precursor and PTMs are still unknown. Two tyrosinase-like enzymes, phomQ1 and phomQ2, catalyze the chlorination and hydroxylation of Tyr, respectively. PhomYb, is proposed to be involved in the construction of the macrocyclic structure. The other 4 ustYa family proteins may be involved in PTMs that generate the unique structure of phomopsin A. PhomYa is required for the hydroxylation of C-beta of Tyr. PhomYc, phomYd, and phomYe are responsible for the biosynthesis of 2,3-dehydroisoleucine (dIle), 2,3-dehydroaspartic acid (dAsp), and 3,4-dehydroproline (dPro), respectively. While dIle formation by phomYc is indispensable for the installation of dAsp by phomYd, the order of the other PTMs have not been elucidated yet. Most of the biosynthetic enzymes likely have broad substrate specificity, and thus, there might be a metabolic grid from a precursor to phomopsin A. The enzyme(s) responsible for the biosynthesis of 3,4-dehydrovaline (dVal) have also not been identified yet. Finally, phomM acts as an S-adenosylmethionine-dependent alpha-N-methyltransferase that catalyzes two successive N-methylation reactions, converting N-desmethyl-phomopsin A to phomopsin A and phomopsin A further to an N,N-dimethylated congener called phomopsin E. This is Methyltransferase phomM from Diaporthe leptostromiformis (Lupinosis disease fungus).